Consider the following 32-residue polypeptide: Acatoxin 1 (32 aa).

3 disulfides stabilise this stretch: cysteine 1-cysteine 15, cysteine 8-cysteine 20, and cysteine 14-cysteine 26.

It is found in the secreted. Its subcellular location is the nematocyst. Functionally, reversibly inhibits acid-sensing ion channels (ASIC) in rat dorsal root ganglia neurons. Reversibly inhibits voltage-gated potassium channels (Kv) in rat DRG neurons. The sequence is that of Acatoxin 1 from Anthopleura cascaia (Sea anemone).